A 315-amino-acid chain; its full sequence is tRNA wybutosine-synthesizing protein 5 (315 aa).

Residues 102 to 267 form the JmjC domain; sequence DEKYYLRSLG…YDTTDTYGNK (166 aa). Position 106 (Tyr106) interacts with 2-oxoglutarate. Fe cation-binding residues include His160 and Asp162. Residues Asn166 and Lys175 each contribute to the 2-oxoglutarate site. His235 serves as a coordination point for Fe cation.

This sequence belongs to the TYW5 family. Homodimer. Requires Fe(2+) as cofactor.

It catalyses the reaction 7-[(3S)-3-amino-3-carboxypropyl]wyosine(37) in tRNA(Phe) + 2-oxoglutarate + O2 = 7-(2-hydroxy-3-amino-3-carboxypropyl)wyosine(37) in tRNA(Phe) + succinate + CO2. It participates in tRNA modification; wybutosine-tRNA(Phe) biosynthesis. Its function is as follows. tRNA hydroxylase that acts as a component of the wybutosine biosynthesis pathway. Wybutosine is a hyper modified guanosine with a tricyclic base found at the 3'-position adjacent to the anticodon of eukaryotic phenylalanine tRNA. Catalyzes the hydroxylation of 7-(a-amino-a-carboxypropyl)wyosine (yW-72) into undermodified hydroxywybutosine (OHyW*). OHyW* being further transformed into hydroxywybutosine (OHyW) by LCMT2/TYW4. OHyW is a derivative of wybutosine found in higher eukaryotes. The protein is tRNA wybutosine-synthesizing protein 5 (Tyw5) of Mus musculus (Mouse).